The chain runs to 472 residues: Ammonium transporter Rh type C (472 aa).

Residues 1–9 (MAWNTNLRW) lie on the Cytoplasmic side of the membrane. A helical transmembrane segment spans residues 10 to 30 (RLPLTCLLLEVVMVILFGVFV). At 31 to 51 (RYDFDADAHWWSWRTEFYYRY) the chain is on the extracellular side. A helical membrane pass occupies residues 52 to 72 (PSFQDVHVMVFVGFGFLMTFL). The Cytoplasmic portion of the chain corresponds to 73 to 76 (QRYG). Residues 77 to 97 (FSAVGFNFLLAAFGIQWALLM) form a helical membrane-spanning segment. At 98–114 (QGWFHFLQGRYIVVGVE) the chain is on the extracellular side. Residues 115 to 135 (NLINADFCVASVCVAFGAVLG) traverse the membrane as a helical segment. Topologically, residues 136–139 (KVSP) are cytoplasmic. Residues 140–160 (IQLLIMTFFQVTLFAVNEFIL) traverse the membrane as a helical segment. Residues 161–168 (LNLLKVKD) lie on the Extracellular side of the membrane. A helical transmembrane segment spans residues 169 to 191 (AGGSMTIHTFGAYFGLTVTRILY). Over 192-209 (RRNLEQSKERQNSVYQSD) the chain is Cytoplasmic. The helical transmembrane segment at 210 to 230 (LFAMIGTLFLWMYWPSFNSAI) threads the bilayer. The Extracellular segment spans residues 231–241 (SYHGDSQHRAA). The helical transmembrane segment at 242 to 262 (INTYCSLAACVLTSVAISSAL) threads the bilayer. Topologically, residues 263–294 (HKKGKLDMVHIQNATPAGGVAVGTAAEMMLMP) are cytoplasmic. Residues 295-315 (YGALIVGFVCGIISTLGFVYL) form a helical membrane-spanning segment. The Extracellular portion of the chain corresponds to 316–336 (TPFLESRLHIQDTCGINNLHG). Residues 337 to 357 (IPGIIGGIVGAVTAASASLEV) form a helical membrane-spanning segment. The Cytoplasmic portion of the chain corresponds to 358–388 (YGKEGLVHSFDFQGFKRDWTARTQGKFQIYG). A helical transmembrane segment spans residues 389 to 409 (LLVTLAMALMGGIIVGVGLIL). At 410 to 450 (RLPFWGQPSDENCFEDAVYWEMPEGNSTVYIPEDPTFKPSG) the chain is on the extracellular side. N-linked (GlcNAc...) asparagine glycosylation is present at asparagine 435. The chain crosses the membrane as a helical span at residues 451-471 (PSVPSVPMVSPLPMASSVPLV). Position 472 (proline 472) is a topological domain, cytoplasmic.

It belongs to the ammonium transporter (TC 2.A.49) family. Rh subfamily. In terms of assembly, homotrimer. In terms of processing, N-glycosylated.

Its subcellular location is the cell membrane. The protein resides in the apical cell membrane. It carries out the reaction NH4(+)(in) = NH4(+)(out). The enzyme catalyses methylamine(out) = methylamine(in). The catalysed reaction is CO2(out) = CO2(in). Its function is as follows. Ammonium transporter involved in the maintenance of acid-base homeostasis. Transports ammonium and its related derivative methylammonium across the plasma membrane of epithelial cells likely contributing to renal transepithelial ammonia transport and ammonia metabolism. Postulated to primarily mediate an electroneutral bidirectional transport of NH3 ammonia species according to a mechanism that implies interaction of an NH4(+) ion with acidic residues of the pore entry followed by dissociation of NH4(+) into NH3 and H(+). As a result NH3 transits through the central pore and is protonated on the extracellular side reforming NH4(+). May act as a CO2 channel providing for renal acid secretion. The chain is Ammonium transporter Rh type C (RHCG) from Pongo abelii (Sumatran orangutan).